The primary structure comprises 166 residues: CDP-archaeol synthase (166 aa).

4 consecutive transmembrane segments (helical) span residues 42 to 62 (FFGG…AATA), 73 to 93 (FLSV…KSFL), 104 to 124 (SWFL…ILIF), and 128 to 148 (WLFG…TPLL).

Belongs to the CDP-archaeol synthase family. Requires Mg(2+) as cofactor.

The protein resides in the cell membrane. It carries out the reaction 2,3-bis-O-(geranylgeranyl)-sn-glycerol 1-phosphate + CTP + H(+) = CDP-2,3-bis-O-(geranylgeranyl)-sn-glycerol + diphosphate. It functions in the pathway membrane lipid metabolism; glycerophospholipid metabolism. Its function is as follows. Catalyzes the formation of CDP-2,3-bis-(O-geranylgeranyl)-sn-glycerol (CDP-archaeol) from 2,3-bis-(O-geranylgeranyl)-sn-glycerol 1-phosphate (DGGGP) and CTP. This reaction is the third ether-bond-formation step in the biosynthesis of archaeal membrane lipids. The chain is CDP-archaeol synthase from Methanoculleus marisnigri (strain ATCC 35101 / DSM 1498 / JR1).